Here is a 152-residue protein sequence, read N- to C-terminus: Prefoldin subunit alpha (152 aa).

The interval 110 to 152 (ETQEEVDELESESQELEQQAQQMQQQMQQQQMQQMQQSQGDEE) is disordered. Residues 111–124 (TQEEVDELESESQE) are compositionally biased toward acidic residues. Over residues 125-152 (LEQQAQQMQQQMQQQQMQQMQQSQGDEE) the composition is skewed to low complexity.

The protein belongs to the prefoldin alpha subunit family. In terms of assembly, heterohexamer of two alpha and four beta subunits.

The protein localises to the cytoplasm. Functionally, molecular chaperone capable of stabilizing a range of proteins. Seems to fulfill an ATP-independent, HSP70-like function in archaeal de novo protein folding. The chain is Prefoldin subunit alpha from Halorubrum lacusprofundi (strain ATCC 49239 / DSM 5036 / JCM 8891 / ACAM 34).